The sequence spans 207 residues: Urease accessory protein UreG (207 aa).

14–21 is a GTP binding site; sequence GPVGSGKT.

Belongs to the SIMIBI class G3E GTPase family. UreG subfamily. Homodimer. UreD, UreF and UreG form a complex that acts as a GTP-hydrolysis-dependent molecular chaperone, activating the urease apoprotein by helping to assemble the nickel containing metallocenter of UreC. The UreE protein probably delivers the nickel.

It localises to the cytoplasm. Functionally, facilitates the functional incorporation of the urease nickel metallocenter. This process requires GTP hydrolysis, probably effectuated by UreG. The chain is Urease accessory protein UreG from Pseudomonas entomophila (strain L48).